A 422-amino-acid polypeptide reads, in one-letter code: MLDMKFVRNNPAAVRDALARRGVSVALDEFYKLDEERREKLFIVEQMKNRRNVVSEEIGRLKKSGKDAPEMVLEMRDLSRQIKEIDEEIKELDGRLQDMLLNIPNIPHESVPEGAGAAENPVVRTWGKPRDFGFTPRPHWEIGEQLDIIDFERGGKVAGARFSFYKGYGARLERAVINFMLDLHTAEHGYVEIFPPFIVNRDSMVGTGQLPKFAEDMFKLEGAEYYLIPTAEVPVTNLYRNEILDGEKLPILHCAYSACFRAEAGAAGRDTRGLIRQHQFNKVELVKFCRPEDSYDELEKLTADAEKVLQKLGLPYRVVVLCTGDLGFSAAKTYDLEVWLPSYQEYKEISSCSNFADFQARRAGIRFRNARGKTEFVHTLNGSGLAVGRTVAAILENYQEADGSVTVPEALRPYMGGLSRIG.

L-serine is bound at residue 230–232 (TAE). 261 to 263 (RAE) serves as a coordination point for ATP. An L-serine-binding site is contributed by Glu284. Residue 348–351 (EISS) coordinates ATP. Ser383 lines the L-serine pocket.

The protein belongs to the class-II aminoacyl-tRNA synthetase family. Type-1 seryl-tRNA synthetase subfamily. Homodimer. The tRNA molecule binds across the dimer.

Its subcellular location is the cytoplasm. The enzyme catalyses tRNA(Ser) + L-serine + ATP = L-seryl-tRNA(Ser) + AMP + diphosphate + H(+). It carries out the reaction tRNA(Sec) + L-serine + ATP = L-seryl-tRNA(Sec) + AMP + diphosphate + H(+). It functions in the pathway aminoacyl-tRNA biosynthesis; selenocysteinyl-tRNA(Sec) biosynthesis; L-seryl-tRNA(Sec) from L-serine and tRNA(Sec): step 1/1. Its function is as follows. Catalyzes the attachment of serine to tRNA(Ser). Is also able to aminoacylate tRNA(Sec) with serine, to form the misacylated tRNA L-seryl-tRNA(Sec), which will be further converted into selenocysteinyl-tRNA(Sec). The protein is Serine--tRNA ligase of Pelotomaculum thermopropionicum (strain DSM 13744 / JCM 10971 / SI).